Consider the following 82-residue polypeptide: Teratocyte protein CftICK-IV (82 aa).

A signal peptide spans 1-21 (MAKILLTFIILTCLIVTITPA).

Post-translationally, contains 4 disulfide bonds. Abundantly expressed by teratocytes, which are extra-embryonic cells released by parasitoid wasps into their hosts during larval eclosion.

It is found in the secreted. In terms of biological role, this endoparasitoid wasp peptide has immununosuppressive and insecticidal activities. Suppress cellular immunity which is detectable as a reduction of hemocyte spread index in the host. In vivo, ingestion of this peptide moderately reduces leaf consumption of D.saccharalis, a permissive host for the lepidoptere C.flavipes. The protein is Teratocyte protein CftICK-IV of Cotesia flavipes (Parasitic wasp).